A 79-amino-acid chain; its full sequence is MSNMMNKFAEKLQGNDDSHQKGKNAKSSNKERDDMNMDMGMGHDQSEGGMKMGHDQSGTKMNAGRGIANDWKTYENMKK.

The tract at residues 1–79 (MSNMMNKFAE…DWKTYENMKK (79 aa)) is disordered. Over residues 8–20 (FAEKLQGNDDSHQ) the composition is skewed to basic and acidic residues.

In Saccharomyces cerevisiae (strain ATCC 204508 / S288c) (Baker's yeast), this protein is Protein SIP18 (SIP18).